Here is a 326-residue protein sequence, read N- to C-terminus: Holliday junction branch migration complex subunit RuvB (326 aa).

The segment at 1-180 (MRSISCSKEY…FGIPLRLEFY (180 aa)) is large ATPase domain (RuvB-L). Residues isoleucine 19, arginine 20, glycine 61, lysine 64, threonine 65, threonine 66, 127-129 (EDF), arginine 170, tyrosine 180, and arginine 217 each bind ATP. Threonine 65 is a Mg(2+) binding site. The tract at residues 181–251 (SFEELVDIIK…IADSALSKLG (71 aa)) is small ATPAse domain (RuvB-S). The tract at residues 254 to 326 (KMGLNKLDVD…QGKEYLSLQY (73 aa)) is head domain (RuvB-H). Arginine 307 and arginine 312 together coordinate DNA.

Belongs to the RuvB family. In terms of assembly, homohexamer. Forms an RuvA(8)-RuvB(12)-Holliday junction (HJ) complex. HJ DNA is sandwiched between 2 RuvA tetramers; dsDNA enters through RuvA and exits via RuvB. An RuvB hexamer assembles on each DNA strand where it exits the tetramer. Each RuvB hexamer is contacted by two RuvA subunits (via domain III) on 2 adjacent RuvB subunits; this complex drives branch migration. In the full resolvosome a probable DNA-RuvA(4)-RuvB(12)-RuvC(2) complex forms which resolves the HJ.

The protein resides in the cytoplasm. It carries out the reaction ATP + H2O = ADP + phosphate + H(+). The RuvA-RuvB-RuvC complex processes Holliday junction (HJ) DNA during genetic recombination and DNA repair, while the RuvA-RuvB complex plays an important role in the rescue of blocked DNA replication forks via replication fork reversal (RFR). RuvA specifically binds to HJ cruciform DNA, conferring on it an open structure. The RuvB hexamer acts as an ATP-dependent pump, pulling dsDNA into and through the RuvAB complex. RuvB forms 2 homohexamers on either side of HJ DNA bound by 1 or 2 RuvA tetramers; 4 subunits per hexamer contact DNA at a time. Coordinated motions by a converter formed by DNA-disengaged RuvB subunits stimulates ATP hydrolysis and nucleotide exchange. Immobilization of the converter enables RuvB to convert the ATP-contained energy into a lever motion, pulling 2 nucleotides of DNA out of the RuvA tetramer per ATP hydrolyzed, thus driving DNA branch migration. The RuvB motors rotate together with the DNA substrate, which together with the progressing nucleotide cycle form the mechanistic basis for DNA recombination by continuous HJ branch migration. Branch migration allows RuvC to scan DNA until it finds its consensus sequence, where it cleaves and resolves cruciform DNA. In Wolbachia sp. subsp. Brugia malayi (strain TRS), this protein is Holliday junction branch migration complex subunit RuvB.